A 382-amino-acid chain; its full sequence is Probable protein phosphatase 2C 65 (382 aa).

A PPM-type phosphatase domain is found at 47–337 (HVSMSIKQGK…DDCAVVVLYL (291 aa)). Aspartate 83 and glycine 84 together coordinate Mn(2+). Residues 107–126 (KIRSSKSAGDENIENNSSQS) are disordered. Aspartate 282 and aspartate 328 together coordinate Mn(2+).

The protein belongs to the PP2C family. Requires Mg(2+) as cofactor. It depends on Mn(2+) as a cofactor.

The enzyme catalyses O-phospho-L-seryl-[protein] + H2O = L-seryl-[protein] + phosphate. The catalysed reaction is O-phospho-L-threonyl-[protein] + H2O = L-threonyl-[protein] + phosphate. The sequence is that of Probable protein phosphatase 2C 65 from Arabidopsis thaliana (Mouse-ear cress).